Reading from the N-terminus, the 205-residue chain is Glycerol-3-phosphate acyltransferase (205 aa).

Over 1–3 (MSA) the chain is Periplasmic. A helical transmembrane segment spans residues 4-24 (IAPGMILFAYLCGSISSAILV). Residues 25–52 (CRIAGLPDPRESGSGNPGATNVLRIGGK) are Cytoplasmic-facing. A helical transmembrane segment spans residues 53–73 (GAAVAVLIFDILKGMLPVWGA). At 74–80 (YALGVTP) the chain is on the periplasmic side. A helical transmembrane segment spans residues 81–101 (FWLGLIAIAACLGHIWPVFFG). At 102-111 (FKGGKGVATA) the chain is on the cytoplasmic side. A helical membrane pass occupies residues 112–132 (FGAIAPIGWDLTGVMAGTWLL). Residues 133 to 137 (TVLLS) lie on the Periplasmic side of the membrane. Residues 138–158 (GYSSLGAIVSALIAPFYVWWF) form a helical membrane-spanning segment. The Cytoplasmic segment spans residues 159–205 (KPQFTFPVSMLSCLILLRHHDNIQRLWRRQETKIWTKLKKKRQKDSE).

The protein belongs to the PlsY family. In terms of assembly, probably interacts with PlsX.

It localises to the cell inner membrane. It carries out the reaction sn-glycerol 3-phosphate + an acyl-CoA = a 1-acyl-sn-glycero-3-phosphate + CoA. The catalysed reaction is a fatty acyl-[ACP] + sn-glycerol 3-phosphate = a 1-acyl-sn-glycero-3-phosphate + holo-[ACP]. It participates in lipid metabolism; phospholipid metabolism. In terms of biological role, catalyzes the transfer of an acyl group from acyl-ACP to glycerol-3-phosphate (G3P) to form lysophosphatidic acid (LPA). This enzyme can also utilize acyl-CoA as fatty acyl donor, but not acyl-PO(4). The protein is Glycerol-3-phosphate acyltransferase of Salmonella schwarzengrund (strain CVM19633).